The chain runs to 576 residues: D-lactate dehydrogenase [cytochrome], mitochondrial (576 aa).

An FAD-binding PCMH-type domain is found at 139 to 320 (EANQRPEIVL…TEATIKCHVR (182 aa)).

Belongs to the FAD-binding oxidoreductase/transferase type 4 family. The cofactor is FAD. Zn(2+) is required as a cofactor.

It is found in the mitochondrion matrix. It carries out the reaction (R)-lactate + 2 Fe(III)-[cytochrome c] = 2 Fe(II)-[cytochrome c] + pyruvate + 2 H(+). Catalyzes the stereospecific oxidation of D-lactate to pyruvate. The chain is D-lactate dehydrogenase [cytochrome], mitochondrial (DLD1) from Kluyveromyces lactis (strain ATCC 8585 / CBS 2359 / DSM 70799 / NBRC 1267 / NRRL Y-1140 / WM37) (Yeast).